The primary structure comprises 545 residues: MAKEIKFDMESRDLLKKGVDALANAVKVTLGPKGRNVILSKTYGAPHITKDGVSVAKEIELECPFENMGAQLVKEVASKTNDDAGDGTTTATILAQSIIGVGLKNVTAGANPMDLKRGIDKAVKAVVTHIAGMAKEVGDDFQKIEHVAKISANGDENIGSLIAEAMRKVKKEGVITVEEAKGTDTTVEVVEGMQFDRGYISPYFVTNTDKMEVQMENPFILIYDKKISVLKEMLPILEQTVQTGKPLLIIAEDIDSEALATLVVNRLRGSLKICAVKAPGFGDRRKAMLEDIAILTGGTVISEETGLKLENATMDMLGTAEKVTVDKDNTTIVNGAGNKEGIASRITQIKAQIENTTSDYDREKLQERLAKLAGGVAVLYVGAASEVEMKEKKDRVEDALSATRAAIEEGTVPGGGTAYIRAIAALEGLKGENEDETTGIEIVKRAIEEPLRQIVANAGKEGAVVVQKVKEGKDDFGYNARTDVFENLYTTGVIDPAKVTRVALENAASIAGMFLTTECVIADKKEDNPAAPAMPGGMGGMGGMM.

Residues 29–32 (TLGP), Lys50, 86–90 (DGTTT), Gly415, and Asp495 each bind ATP.

Belongs to the chaperonin (HSP60) family. Forms a cylinder of 14 subunits composed of two heptameric rings stacked back-to-back. Interacts with the co-chaperonin GroES.

It is found in the cytoplasm. The enzyme catalyses ATP + H2O + a folded polypeptide = ADP + phosphate + an unfolded polypeptide.. Together with its co-chaperonin GroES, plays an essential role in assisting protein folding. The GroEL-GroES system forms a nano-cage that allows encapsulation of the non-native substrate proteins and provides a physical environment optimized to promote and accelerate protein folding. In Porphyromonas gingivalis (strain ATCC BAA-308 / W83), this protein is Chaperonin GroEL.